The chain runs to 207 residues: Proteasome subunit beta 2 (207 aa).

Positions 1–13 (METNNKLKILKTG) are cleaved as a propeptide — removed in mature form; by autocatalysis. The active-site Nucleophile is threonine 14.

This sequence belongs to the peptidase T1B family. As to quaternary structure, the 20S proteasome core is composed of 14 alpha and 14 beta subunits that assemble into four stacked heptameric rings, resulting in a barrel-shaped structure. The two inner rings, each composed of seven catalytic beta subunits, are sandwiched by two outer rings, each composed of seven alpha subunits. The catalytic chamber with the active sites is on the inside of the barrel. Has a gated structure, the ends of the cylinder being occluded by the N-termini of the alpha-subunits. Is capped at one or both ends by the proteasome regulatory ATPase, PAN.

It is found in the cytoplasm. The enzyme catalyses Cleavage of peptide bonds with very broad specificity.. With respect to regulation, the formation of the proteasomal ATPase PAN-20S proteasome complex, via the docking of the C-termini of PAN into the intersubunit pockets in the alpha-rings, triggers opening of the gate for substrate entry. Interconversion between the open-gate and close-gate conformations leads to a dynamic regulation of the 20S proteasome proteolysis activity. Functionally, component of the proteasome core, a large protease complex with broad specificity involved in protein degradation. This chain is Proteasome subunit beta 2, found in Sulfurisphaera tokodaii (strain DSM 16993 / JCM 10545 / NBRC 100140 / 7) (Sulfolobus tokodaii).